The sequence spans 412 residues: Lysosomal phospholipase A and acyltransferase (412 aa).

Residues M1–P33 form the signal peptide. Substrate is bound at residue D46. C65 and C89 are oxidised to a cystine. N-linked (GlcNAc...) asparagine glycosylation is present at N99. The Acyl-ester intermediate role is filled by S198. A Zn(2+)-binding site is contributed by S198. Substrate is bound at residue M199. N273 and N289 each carry an N-linked (GlcNAc...) asparagine glycan. Residue C355 participates in Zn(2+) binding. Active-site charge relay system residues include D360 and H392. H392 serves as a coordination point for Zn(2+). Residue N398 is glycosylated (N-linked (GlcNAc...) asparagine).

It belongs to the AB hydrolase superfamily. Lipase family. In terms of processing, N-glycosylated. N-glycosylation is important for maturation of the enzyme and normal subcellular location. Detected in blood plasma. Detected in alveolar macrophages (at protein level). Detected in heart, liver, spleen, kidney, thymus, brain and lung.

The protein localises to the secreted. The protein resides in the lysosome. It is found in the membrane. The catalysed reaction is a 1,2-diacyl-sn-glycero-3-phosphocholine + H2O = a 2-acyl-sn-glycero-3-phosphocholine + a fatty acid + H(+). It catalyses the reaction 1-hexadecanoyl-2-(9Z-octadecenoyl)-sn-glycero-3-phosphocholine + H2O = 2-(9Z-octadecenoyl)-sn-glycero-3-phosphocholine + hexadecanoate + H(+). The enzyme catalyses 1,2-di-(9Z-octadecenoyl)-sn-glycero-3-phosphocholine + H2O = 2-(9Z-octadecenoyl)-sn-glycero-3-phosphocholine + (9Z)-octadecenoate + H(+). It carries out the reaction 1-hexadecanoyl-2-glutaroyl-sn-glycero-3-phosphocholine + H2O = 2-glutaroyl-sn-glycero-3-phosphocholine + hexadecanoate + H(+). The catalysed reaction is 1-hexadecanoyl-2-nonadioyl-sn-glycero-3-phosphocholine + H2O = 2-nonadioyl-sn-glycero-3-phosphocholine + hexadecanoate + H(+). It catalyses the reaction 1-hexadecanoyl-2-(5-oxopentanoyl)-sn-glycero-3-phosphocholine + H2O = 2-(5-oxopentanoyl)-sn-glycero-3-phosphocholine + hexadecanoate + H(+). The enzyme catalyses 1-hexadecanoyl-2-(9-oxononanoyl)-sn-glycero-3-phosphocholine + H2O = 2-(9-oxononanoyl)-sn-glycero-3-phosphocholine + hexadecanoate + H(+). It carries out the reaction 1,2-dihexadecanoyl-sn-glycero-3-phosphocholine + H2O = 2-hexadecanoyl-sn-glycero-3-phosphocholine + hexadecanoate + H(+). The catalysed reaction is a 1,2-diacyl-sn-glycero-3-phosphocholine + H2O = a 1-acyl-sn-glycero-3-phosphocholine + a fatty acid + H(+). It catalyses the reaction 1-hexadecanoyl-2-(9Z-octadecenoyl)-sn-glycero-3-phosphocholine + H2O = 1-hexadecanoyl-sn-glycero-3-phosphocholine + (9Z)-octadecenoate + H(+). The enzyme catalyses 1,2-di-(9Z-octadecenoyl)-sn-glycero-3-phosphocholine + H2O = 1-(9Z-octadecenoyl)-sn-glycero-3-phosphocholine + (9Z)-octadecenoate + H(+). It carries out the reaction 1,2-dihexadecanoyl-sn-glycero-3-phosphocholine + H2O = 1-hexadecanoyl-sn-glycero-3-phosphocholine + hexadecanoate + H(+). The catalysed reaction is a 1-acyl-sn-glycero-3-phosphocholine + H2O = sn-glycerol 3-phosphocholine + a fatty acid + H(+). It catalyses the reaction 1-hexadecanoyl-sn-glycero-3-phosphocholine + H2O = sn-glycerol 3-phosphocholine + hexadecanoate + H(+). The enzyme catalyses N-(acetyl)-sphing-4-enine + a 1,2-diacyl-sn-glycero-3-phosphoethanolamine = 1-O-acyl-N-(acetyl)-sphing-4-enine + a 2-acyl-sn-glycero-3-phosphoethanolamine. It carries out the reaction 1-hexadecanoyl-2-(9Z-octadecenoyl)-sn-glycero-3-phosphoethanolamine + N-(acetyl)-sphing-4-enine = 2-(9Z-octadecenoyl)-sn-glycero-3-phosphoethanolamine + 1-hexadecanoyl-N-(acetyl)-sphing-4-enine. The catalysed reaction is 1-hexadecanoyl-2-(9Z,12Z-octadecadienoyl)-sn-glycero-3-phosphoethanolamine + N-(acetyl)-sphing-4-enine = 2-(9Z,12Z)-octadecadienoyl-sn-glycero-3-phosphoethanolamine + 1-hexadecanoyl-N-(acetyl)-sphing-4-enine. It catalyses the reaction 1-hexadecanoyl-2-(5Z,8Z,11Z,14Z-eicosatetraenoyl)-sn-glycero-3-phosphoethanolamine + N-(acetyl)-sphing-4-enine = 2-(5Z,8Z,11Z,14Z)-eicosatetraenoyl-sn-glycero-3-phosphoethanolamine + 1-hexadecanoyl-N-(acetyl)-sphing-4-enine. The enzyme catalyses N-(acetyl)-sphing-4-enine + a 1,2-diacyl-sn-glycero-3-phosphoethanolamine = 1-O-acyl-N-(acetyl)-sphing-4-enine + a 1-acyl-sn-glycero-3-phosphoethanolamine. It carries out the reaction 1-hexadecanoyl-2-(9Z-octadecenoyl)-sn-glycero-3-phosphoethanolamine + N-(acetyl)-sphing-4-enine = 1-(9Z-octadecenoyl)-N-(acetyl)-sphing-4-enine + 1-hexadecanoyl-sn-glycero-3-phosphoethanolamine. The catalysed reaction is 1-hexadecanoyl-2-(9Z,12Z-octadecadienoyl)-sn-glycero-3-phosphoethanolamine + N-(acetyl)-sphing-4-enine = 1-(9Z,12Z-octadecadienoyl)-N-acetylsphing-4-enine + 1-hexadecanoyl-sn-glycero-3-phosphoethanolamine. It catalyses the reaction 1-hexadecanoyl-2-(5Z,8Z,11Z,14Z-eicosatetraenoyl)-sn-glycero-3-phosphoethanolamine + N-(acetyl)-sphing-4-enine = 1-(5Z,8Z,11Z,14Z)-eicosatetraenoyl-N-(acetyl)-sphing-4-enine + 1-hexadecanoyl-sn-glycero-3-phosphoethanolamine. The enzyme catalyses N-(acetyl)-sphing-4-enine + a 1,2-diacyl-sn-glycero-3-phosphocholine = 1-O-acyl-N-(acetyl)-sphing-4-enine + a 2-acyl-sn-glycero-3-phosphocholine. It carries out the reaction 1-hexadecanoyl-2-(9Z-octadecenoyl)-sn-glycero-3-phosphocholine + N-(acetyl)-sphing-4-enine = 1-hexadecanoyl-N-(acetyl)-sphing-4-enine + 2-(9Z-octadecenoyl)-sn-glycero-3-phosphocholine. The catalysed reaction is 1-hexadecanoyl-2-(9Z,12Z-octadecadienoyl)-sn-glycero-3-phosphocholine + N-(acetyl)-sphing-4-enine = 2-(9Z,12Z-octadecadienoyl)-sn-glycero-3-phosphocholine + 1-hexadecanoyl-N-(acetyl)-sphing-4-enine. It catalyses the reaction 1-hexadecanoyl-2-(5Z,8Z,11Z,14Z-eicosatetraenoyl)-sn-glycero-3-phosphocholine + N-(acetyl)-sphing-4-enine = 1-hexadecanoyl-N-(acetyl)-sphing-4-enine + 2-(5Z,8Z,11Z,14Z)-eicosatetraenoyl-sn-glycero-3-phosphocholine. The enzyme catalyses 1-hexadecanoyl-2-(4Z,7Z,10Z,13Z,16Z,19Z-docosahexaenoyl)-sn-glycero-3-phosphocholine + N-(acetyl)-sphing-4-enine = 2-(4Z,7Z,10Z,13Z,16Z,19Z-docosahexaenoyl)-sn-glycero-3-phosphocholine + 1-hexadecanoyl-N-(acetyl)-sphing-4-enine. It carries out the reaction 1-hexadecanoyl-2-nonadioyl-sn-glycero-3-phosphocholine + N-(acetyl)-sphing-4-enine = 2-nonadioyl-sn-glycero-3-phosphocholine + 1-hexadecanoyl-N-(acetyl)-sphing-4-enine. The catalysed reaction is 1-octadecanoyl-2-(9Z-octadecenoyl)-sn-glycero-3-phosphocholine + N-(acetyl)-sphing-4-enine = 1-octadecanoyl-N-(acetyl)-sphing-4-enine + 2-(9Z-octadecenoyl)-sn-glycero-3-phosphocholine. It catalyses the reaction 1-(9Z)-octadecenoyl-2-octadecanoyl-sn-glycero-3-phosphocholine + N-(acetyl)-sphing-4-enine = 2-octadecanoyl-sn-glycero-3-phosphocholine + 1-(9Z-octadecenoyl)-N-(acetyl)-sphing-4-enine. The enzyme catalyses 1-octadecanoyl-2-(5Z,8Z,11Z,14Z-eicosatetraenoyl)-sn-glycero-3-phosphocholine + N-(acetyl)-sphing-4-enine = 1-octadecanoyl-N-(acetyl)-sphing-4-enine + 2-(5Z,8Z,11Z,14Z)-eicosatetraenoyl-sn-glycero-3-phosphocholine. It carries out the reaction 1-(9Z-octadecenoyl)-2-hexadecanoyl-sn-glycero-3-phosphocholine + N-(acetyl)-sphing-4-enine = 1-(9Z-octadecenoyl)-N-(acetyl)-sphing-4-enine + 2-hexadecanoyl-sn-glycero-3-phosphocholine. The catalysed reaction is N-(acetyl)-sphing-4-enine + a 1,2-diacyl-sn-glycero-3-phosphocholine = 1-O-acyl-N-(acetyl)-sphing-4-enine + a 1-acyl-sn-glycero-3-phosphocholine. It catalyses the reaction 1-hexadecanoyl-2-(9Z-octadecenoyl)-sn-glycero-3-phosphocholine + N-(acetyl)-sphing-4-enine = 1-(9Z-octadecenoyl)-N-(acetyl)-sphing-4-enine + 1-hexadecanoyl-sn-glycero-3-phosphocholine. The enzyme catalyses 1-hexadecanoyl-2-(9Z,12Z-octadecadienoyl)-sn-glycero-3-phosphocholine + N-(acetyl)-sphing-4-enine = 1-(9Z,12Z-octadecadienoyl)-N-acetylsphing-4-enine + 1-hexadecanoyl-sn-glycero-3-phosphocholine. It carries out the reaction 1-hexadecanoyl-2-(5Z,8Z,11Z,14Z-eicosatetraenoyl)-sn-glycero-3-phosphocholine + N-(acetyl)-sphing-4-enine = 1-(5Z,8Z,11Z,14Z)-eicosatetraenoyl-N-(acetyl)-sphing-4-enine + 1-hexadecanoyl-sn-glycero-3-phosphocholine. The catalysed reaction is 1-hexadecanoyl-2-(4Z,7Z,10Z,13Z,16Z,19Z-docosahexaenoyl)-sn-glycero-3-phosphocholine + N-(acetyl)-sphing-4-enine = 1-(4Z,7Z,10Z,13Z,16Z,19Z-docosahexaenoyl)-N-(acetyl)-sphing-4-enine + 1-hexadecanoyl-sn-glycero-3-phosphocholine. It catalyses the reaction 1-octadecanoyl-2-(9Z-octadecenoyl)-sn-glycero-3-phosphocholine + N-(acetyl)-sphing-4-enine = 1-(9Z-octadecenoyl)-N-(acetyl)-sphing-4-enine + 1-octadecanoyl-sn-glycero-3-phosphocholine. The enzyme catalyses 1-octadecanoyl-2-(9Z,12Z)-octadecadienoyl-sn-glycero-3-phosphocholine + N-(acetyl)-sphing-4-enine = 1-(9Z,12Z-octadecadienoyl)-N-acetylsphing-4-enine + 1-octadecanoyl-sn-glycero-3-phosphocholine. It carries out the reaction 1-(9Z-octadecenoyl)-2-hexadecanoyl-sn-glycero-3-phosphocholine + N-(acetyl)-sphing-4-enine = 1-hexadecanoyl-N-(acetyl)-sphing-4-enine + 1-(9Z-octadecenoyl)-sn-glycero-3-phosphocholine. The catalysed reaction is 1-(9Z)-octadecenoyl-2-octadecanoyl-sn-glycero-3-phosphocholine + N-(acetyl)-sphing-4-enine = 1-octadecanoyl-N-(acetyl)-sphing-4-enine + 1-(9Z-octadecenoyl)-sn-glycero-3-phosphocholine. It catalyses the reaction 1,2-di-(9Z-octadecenoyl)-sn-glycero-3-phosphocholine + N-(acetyl)-sphing-4-enine = 1-(9Z-octadecenoyl)-N-(acetyl)-sphing-4-enine + 1-(9Z-octadecenoyl)-sn-glycero-3-phosphocholine. The enzyme catalyses 1-octadecanoyl-2-(5Z,8Z,11Z,14Z-eicosatetraenoyl)-sn-glycero-3-phosphocholine + N-(acetyl)-sphing-4-enine = 1-(5Z,8Z,11Z,14Z)-eicosatetraenoyl-N-(acetyl)-sphing-4-enine + 1-octadecanoyl-sn-glycero-3-phosphocholine. It carries out the reaction a 1,2-diacyl-sn-glycero-3-phospho-L-serine + N-(acetyl)-sphing-4-enine = a 2-acyl-sn-glycero-3-phospho-L-serine + 1-O-acyl-N-(acetyl)-sphing-4-enine. The catalysed reaction is 1-octadecanoyl-2-(9Z-octadecenoyl)-sn-glycero-3-phospho-L-serine + N-(acetyl)-sphing-4-enine = 2-(9Z-octadecenoyl)-sn-glycero-3-phospho-L-serine + 1-octadecanoyl-N-(acetyl)-sphing-4-enine. It catalyses the reaction a 1,2-diacyl-sn-glycero-3-phospho-L-serine + N-(acetyl)-sphing-4-enine = 1-O-acyl-N-(acetyl)-sphing-4-enine + a 1-acyl-sn-glycero-3-phospho-L-serine. The enzyme catalyses 1-octadecanoyl-2-(9Z-octadecenoyl)-sn-glycero-3-phospho-L-serine + N-(acetyl)-sphing-4-enine = 1-octadecanoyl-sn-glycero-3-phosphoserine + 1-(9Z-octadecenoyl)-N-(acetyl)-sphing-4-enine. It carries out the reaction a 1,2-diacyl-sn-glycero-3-phospho-(1'-sn-glycerol) + N-(acetyl)-sphing-4-enine = 2-acyl-sn-glycero-3-phospho-(1'-sn-glycerol) + 1-O-acyl-N-(acetyl)-sphing-4-enine. The catalysed reaction is 1-octadecanoyl-2-(9Z-octadecenoyl)-sn-glycero-3-phospho-(1'-sn-glycerol) + N-(acetyl)-sphing-4-enine = 2-(9Z-octadecenoyl)-sn-glycero-3-phospho-(1'-sn-glycerol) + 1-octadecanoyl-N-(acetyl)-sphing-4-enine. It catalyses the reaction a 1,2-diacyl-sn-glycero-3-phospho-(1'-sn-glycerol) + N-(acetyl)-sphing-4-enine = 1-O-acyl-N-(acetyl)-sphing-4-enine + 1-acyl-sn-glycero-3-phospho-(1'-sn-glycerol). The enzyme catalyses 1-octadecanoyl-2-(9Z-octadecenoyl)-sn-glycero-3-phospho-(1'-sn-glycerol) + N-(acetyl)-sphing-4-enine = 1-octadecanoyl-sn-glycero-3-phospho-(1'-sn-glycerol) + 1-(9Z-octadecenoyl)-N-(acetyl)-sphing-4-enine. It carries out the reaction an N-acylethanolamine + a 1,2-diacyl-sn-glycero-3-phosphocholine = 2-(acylamino)ethyl fatty acid + a 2-acyl-sn-glycero-3-phosphocholine. The catalysed reaction is an N-acylethanolamine + a 1,2-diacyl-sn-glycero-3-phosphocholine = 2-(acylamino)ethyl fatty acid + a 1-acyl-sn-glycero-3-phosphocholine. It catalyses the reaction N-(5Z,8Z,11Z,14Z-eicosatetraenoyl)-ethanolamine + 1,2-di-(9Z-octadecenoyl)-sn-glycero-3-phosphocholine = 2-[(5Z,8Z,11Z,14Z)-eicosatetraenoylamino]ethyl (9Z)-octadecenoate + (9Z-octadecenoyl)-sn-glycero-3-phosphocholine. The enzyme catalyses N-(9Z-octadecenoyl) ethanolamine + 1,2-di-(9Z-octadecenoyl)-sn-glycero-3-phosphocholine = 2-[(9Z)-octadecenoylamino]ethyl (9Z)-octadecenoate + (9Z-octadecenoyl)-sn-glycero-3-phosphocholine. It carries out the reaction a 3-acyl-sn-glycerol + a 1,2-diacyl-sn-glycero-3-phosphocholine = a 1,3-diacylglycerol + a 1-acyl-sn-glycero-3-phosphocholine. The catalysed reaction is a 3-acyl-sn-glycerol + a 1,2-diacyl-sn-glycero-3-phosphocholine = a 1,3-diacylglycerol + a 2-acyl-sn-glycero-3-phosphocholine. It catalyses the reaction 3-(9Z-octadecenoyl)-sn-glycerol + 1,2-di-(9Z-octadecenoyl)-sn-glycero-3-phosphocholine = 1,3-di-(9Z-octadecenoyl)-glycerol + (9Z-octadecenoyl)-sn-glycero-3-phosphocholine. The enzyme catalyses 3-hexadecanoyl-sn-glycerol + 1,2-di-(9Z-octadecenoyl)-sn-glycero-3-phosphocholine = 1-(9Z)-octadecenoyl-3-hexadecanoyl-sn-glycerol + (9Z-octadecenoyl)-sn-glycero-3-phosphocholine. It carries out the reaction a 1-acyl-sn-glycerol + a 1,2-diacyl-sn-glycero-3-phosphocholine = a 1,3-diacylglycerol + a 2-acyl-sn-glycero-3-phosphocholine. The catalysed reaction is a 1-acyl-sn-glycerol + a 1,2-diacyl-sn-glycero-3-phosphocholine = a 1,3-diacylglycerol + a 1-acyl-sn-glycero-3-phosphocholine. It catalyses the reaction 1-(9Z-octadecenoyl)-sn-glycerol + 1,2-di-(9Z-octadecenoyl)-sn-glycero-3-phosphocholine = 1,3-di-(9Z-octadecenoyl)-glycerol + (9Z-octadecenoyl)-sn-glycero-3-phosphocholine. The enzyme catalyses 1-hexadecanoyl-sn-glycerol + 1,2-di-(9Z-octadecenoyl)-sn-glycero-3-phosphocholine = 1-hexadecanoyl-3-(9Z)-octadecenoyl-sn-glycerol + (9Z-octadecenoyl)-sn-glycero-3-phosphocholine. It carries out the reaction a 2-acylglycerol + a 1,2-diacyl-sn-glycero-3-phosphocholine = a 1,2-diacylglycerol + a 2-acyl-sn-glycero-3-phosphocholine. The catalysed reaction is a 2-acylglycerol + a 1,2-diacyl-sn-glycero-3-phosphocholine = a 1,2-diacylglycerol + a 1-acyl-sn-glycero-3-phosphocholine. It catalyses the reaction 2-hexadecanoylglycerol + 1,2-di-(9Z-octadecenoyl)-sn-glycero-3-phosphocholine = 1-(9Z)-octadecenoyl-2-hexadecanoylglycerol + (9Z-octadecenoyl)-sn-glycero-3-phosphocholine. The enzyme catalyses 1-O-alkylglycerol + a 1,2-diacyl-sn-glycero-3-phosphocholine = 1-O-alkyl-3-acylglycerol + a 1-acyl-sn-glycero-3-phosphocholine. It carries out the reaction 1-O-alkylglycerol + a 1,2-diacyl-sn-glycero-3-phosphocholine = 1-O-alkyl-3-acylglycerol + a 2-acyl-sn-glycero-3-phosphocholine. The catalysed reaction is 1-O-hexadecylglycerol + 1,2-di-(9Z-octadecenoyl)-sn-glycero-3-phosphocholine = 1-O-hexadecyl-3-(9Z)-octadecenoylglycerol + (9Z-octadecenoyl)-sn-glycero-3-phosphocholine. It catalyses the reaction 1-O-alkyl-2-acyl-sn-glycerol + a 1,2-diacyl-sn-glycero-3-phosphocholine = 1-O-alkyl-2,3-diacyl-sn-glycerol + a 2-acyl-sn-glycero-3-phosphocholine. The enzyme catalyses 1-O-alkyl-2-acyl-sn-glycerol + a 1,2-diacyl-sn-glycero-3-phosphocholine = 1-O-alkyl-2,3-diacyl-sn-glycerol + a 1-acyl-sn-glycero-3-phosphocholine. It carries out the reaction 1-O-hexadecyl-2-acetyl-sn-glycerol + 1,2-di-(9Z-octadecenoyl)-sn-glycero-3-phosphocholine = 1-O-hexadecyl-2-acetyl-3-(9Z)-octadecenoyl-sn-glycerol + (9Z-octadecenoyl)-sn-glycero-3-phosphocholine. The catalysed reaction is 1-O-hexadecyl-2-O-methyl-sn-glycerol + 1,2-di-(9Z-octadecenoyl)-sn-glycero-3-phosphocholine = 1-O-hexadecyl-2-O-methyl-3-(9Z)-octadecenoyl-sn-glycerol + (9Z-octadecenoyl)-sn-glycero-3-phosphocholine. It catalyses the reaction a 1,2-diacyl-sn-glycero-3-phosphoethanolamine + H2O = a 1-acyl-sn-glycero-3-phosphoethanolamine + a fatty acid + H(+). The enzyme catalyses 1-acyl-2-(5Z,8Z,11Z,14Z)-eicosatetraenoyl-sn-glycero-3-phosphoethanolamine + H2O = a 1-acyl-sn-glycero-3-phosphoethanolamine + (5Z,8Z,11Z,14Z)-eicosatetraenoate + H(+). It carries out the reaction a 1,2-diacyl-sn-glycero-3-phospho-(1'-sn-glycerol) + H2O = 1-acyl-sn-glycero-3-phospho-(1'-sn-glycerol) + a fatty acid + H(+). The catalysed reaction is 1-hexadecanoyl-2-(9Z-octadecenoyl)-sn-glycero-3-phospho-(1'-sn-glycerol) + H2O = 1-hexadecanoyl-sn-glycero-3-phospho-(1'-sn-glycerol) + (9Z)-octadecenoate + H(+). It catalyses the reaction a 1,2-diacyl-sn-glycero-3-phospho-(1'-sn-glycerol) + H2O = 2-acyl-sn-glycero-3-phospho-(1'-sn-glycerol) + a fatty acid + H(+). The enzyme catalyses 1-hexadecanoyl-2-(9Z-octadecenoyl)-sn-glycero-3-phospho-(1'-sn-glycerol) + H2O = 2-(9Z-octadecenoyl)-sn-glycero-3-phospho-(1'-sn-glycerol) + hexadecanoate + H(+). With respect to regulation, phospholipase sn-2 versus sn-1 positional specificity is affected by the phospholipid composition of membranes. Phospholipase A2 activity toward 1-hexadecanoyl-2-(5Z,8Z,11Z,14Z-eicosatetraenoyl)-sn-glycero-3-phosphocholine (PAPE) is enhanced in the presence of 1,2-dioleoyl-sn-glycero-3-phosphocholine (DOPC), which promotes lipid bilayer formation. O-acyltransferase activity is inhibited by antiarrhythmic drug amiodarone. Its function is as follows. Has dual calcium-independent phospholipase and O-acyltransferase activities with a potential role in glycerophospholipid homeostasis and remodeling of acyl groups of lipophilic alcohols present in acidic cellular compartments. Catalyzes hydrolysis of the ester bond of the fatty acyl group attached at sn-1 or sn-2 position of phospholipids (phospholipase A1 or A2 activity) and transfer it to the hydroxyl group at the first carbon of lipophilic alcohols (O-acyltransferase activity). Among preferred fatty acyl donors are phosphatidylcholines, phosphatidylethanolamines, phosphatidylglycerols and phosphatidylserines. Favors sn-2 over sn-1 deacylation of unsaturated fatty acyl groups of phosphatidylcholines, phosphatidylethanolamines, and phosphatidylglycerols. Among preferred fatty acyl acceptors are natural lipophilic alcohols including short-chain ceramide N-acetyl-sphingosine (C2 ceramide), alkylacylglycerols, monoacylglycerols, and acylethanolamides such as anandamide and oleoylethanolamide. Selectively hydrolyzes the sn-1 fatty acyl group of truncated oxidized phospholipids and may play a role in detoxification of reactive oxidized phospholipids during oxidative stress. Required for normal phospholipid degradation in alveolar macrophages with potential implications in the clearance of pulmonary surfactant, which is mainly composed of dipalmitoylphosphatidylcholine (1,2-dihexadecanoyl-sn-glycero-3-phosphocholine). Involved in the first step of bis(monoacylglycero)phosphate (BMP) de novo synthesis from phosphatidylglycerol (1,2-diacyl-sn-glycero-3-phospho-(1'-sn-glycerol), PG). BMP is an important player in cargo sorting and degradation, regulation of cellular cholesterol levels and intercellular communication. At neutral pH, hydrolyzes the sn-1 fatty acyl group of the lysophosphatidylcholines. The chain is Lysosomal phospholipase A and acyltransferase from Mus musculus (Mouse).